The sequence spans 124 residues: Testis-expressed protein 54 (124 aa).

Over residues 1–10 the composition is skewed to basic and acidic residues; sequence MGCCQDKDFE. Disordered regions lie at residues 1–77 and 90–124; these read MGCC…SNES and FGRRGSSRPSKRQPDQIRKQESPIREGNQEEPEKG. A compositionally biased stretch (acidic residues) spans 11–30; that stretch reads MSDEQSKEEESEDGREDETT. 2 stretches are compositionally biased toward basic and acidic residues: residues 34 to 50 and 101 to 124; these read RGPRECERGLPEGRGEL and RQPDQIRKQESPIREGNQEEPEKG.

As to expression, expressed in Testis.

The polypeptide is Testis-expressed protein 54 (Homo sapiens (Human)).